Consider the following 434-residue polypeptide: Methylenetetrahydrofolate--tRNA-(uracil-5-)-methyltransferase TrmFO (434 aa).

10 to 15 (GAGLAG) contacts FAD.

It belongs to the MnmG family. TrmFO subfamily. FAD is required as a cofactor.

The protein resides in the cytoplasm. It carries out the reaction uridine(54) in tRNA + (6R)-5,10-methylene-5,6,7,8-tetrahydrofolate + NADH + H(+) = 5-methyluridine(54) in tRNA + (6S)-5,6,7,8-tetrahydrofolate + NAD(+). The catalysed reaction is uridine(54) in tRNA + (6R)-5,10-methylene-5,6,7,8-tetrahydrofolate + NADPH + H(+) = 5-methyluridine(54) in tRNA + (6S)-5,6,7,8-tetrahydrofolate + NADP(+). Functionally, catalyzes the folate-dependent formation of 5-methyl-uridine at position 54 (M-5-U54) in all tRNAs. In Bacillus cereus (strain G9842), this protein is Methylenetetrahydrofolate--tRNA-(uracil-5-)-methyltransferase TrmFO.